We begin with the raw amino-acid sequence, 168 residues long: Phosphopantetheine adenylyltransferase (168 aa).

Threonine 13 lines the substrate pocket. Residues 13 to 14 (TF) and histidine 21 each bind ATP. Lysine 45, leucine 78, and arginine 92 together coordinate substrate. ATP contacts are provided by residues 93 to 95 (GLR), glutamate 103, and 128 to 134 (TQFISSS).

The protein belongs to the bacterial CoaD family. Homohexamer. The cofactor is Mg(2+).

Its subcellular location is the cytoplasm. The catalysed reaction is (R)-4'-phosphopantetheine + ATP + H(+) = 3'-dephospho-CoA + diphosphate. It functions in the pathway cofactor biosynthesis; coenzyme A biosynthesis; CoA from (R)-pantothenate: step 4/5. Functionally, reversibly transfers an adenylyl group from ATP to 4'-phosphopantetheine, yielding dephospho-CoA (dPCoA) and pyrophosphate. The chain is Phosphopantetheine adenylyltransferase from Wolbachia pipientis subsp. Culex pipiens (strain wPip).